We begin with the raw amino-acid sequence, 203 residues long: MESTDKLTDTNAILAYLYETFPLCFIAEGETKPLKIGLFQDLAERLADDSKVSKTQLRVALRRYTSSWRYLKGVKAGAKRIDLDGNECAELEQEHIDHAILTLKESQDKAKAKRQALAPKKPAKKVAPKRAPAVKKERPAPVAAPVIKLVPAKLEDLKQKQRVNVKLGATPVPGVVTDINKEDVLVQLDSGLSIKVRAEHILL.

Positions Lys111 to Arg138 are disordered.

This sequence belongs to the ProQ family.

The protein resides in the cytoplasm. Its function is as follows. RNA chaperone with significant RNA binding, RNA strand exchange and RNA duplexing activities. This chain is RNA chaperone ProQ, found in Shewanella frigidimarina (strain NCIMB 400).